We begin with the raw amino-acid sequence, 258 residues long: UPF0246 protein HS_0482 (258 aa).

Belongs to the UPF0246 family.

The polypeptide is UPF0246 protein HS_0482 (Histophilus somni (strain 129Pt) (Haemophilus somnus)).